The following is a 446-amino-acid chain: Sensor-type histidine kinase PrrB (446 aa).

2 helical membrane-spanning segments follow: residues 19-39 and 151-171; these read VVAT…VVWV and LLIC…LAAF. An HAMP domain is found at 172-222; sequence AVRPFKQLAEQTRSIDAGDEAPRVEVHGASEAIEIAEAMRGMLQRIWNEQN. The Histidine kinase domain maps to 237-446; sequence VSSHELRTPL…RLVLRLPGPS (210 aa). A Phosphohistidine; by autocatalysis modification is found at histidine 240.

In terms of processing, autophosphorylated.

The protein resides in the cell membrane. The enzyme catalyses ATP + protein L-histidine = ADP + protein N-phospho-L-histidine.. Member of the two-component regulatory system PrrB/PrrA that is involved specifically in early intracellular multiplication of Mycobacterium and is essential for its viability. Functions as a sensor protein kinase which is autophosphorylated at a histidine residue and transfers its phosphate group to the conserved aspartic acid residue in the regulatory domain of PrrA. In turn, PrrA binds to the upstream promoter regions of target genes including itself to positively regulate their expression. The protein is Sensor-type histidine kinase PrrB (prrB) of Mycobacterium bovis (strain ATCC BAA-935 / AF2122/97).